The following is a 112-amino-acid chain: Cytochrome c (112 aa).

Positions 23, 26, 27, and 89 each coordinate heme c.

It belongs to the cytochrome c family. In terms of processing, binds 1 heme c group covalently per subunit.

Its subcellular location is the mitochondrion intermembrane space. Its function is as follows. Electron carrier protein. The oxidized form of the cytochrome c heme group can accept an electron from the heme group of the cytochrome c1 subunit of cytochrome reductase. Cytochrome c then transfers this electron to the cytochrome oxidase complex, the final protein carrier in the mitochondrial electron-transport chain. This Chlamydomonas reinhardtii (Chlamydomonas smithii) protein is Cytochrome c (CYC1).